Here is a 606-residue protein sequence, read N- to C-terminus: Membrane protein insertase YidC (606 aa).

Residues 8-28 form a helical membrane-spanning segment; that stretch reads LILATALSFIVILVWFVLFPP. Positions 33-59 are disordered; it reads MPLTGETSTELTPDAATGSLPSVTSDT. 6 helical membrane-spanning segments follow: residues 116 to 136, 348 to 368, 374 to 394, 448 to 468, 506 to 526, and 542 to 562; these read IVTM…YGWA, FIDS…FFLL, FIGN…AILL, LPIL…FVTI, SIMA…SMWL, and IFAW…SGLV.

Belongs to the OXA1/ALB3/YidC family. Type 1 subfamily. As to quaternary structure, interacts with the Sec translocase complex via SecD. Specifically interacts with transmembrane segments of nascent integral membrane proteins during membrane integration.

It localises to the cell inner membrane. Its function is as follows. Required for the insertion and/or proper folding and/or complex formation of integral membrane proteins into the membrane. Involved in integration of membrane proteins that insert both dependently and independently of the Sec translocase complex, as well as at least some lipoproteins. Aids folding of multispanning membrane proteins. The sequence is that of Membrane protein insertase YidC from Roseobacter denitrificans (strain ATCC 33942 / OCh 114) (Erythrobacter sp. (strain OCh 114)).